The following is a 68-amino-acid chain: Large ribosomal subunit protein uL29 (68 aa).

The protein belongs to the universal ribosomal protein uL29 family.

The polypeptide is Large ribosomal subunit protein uL29 (Acidiphilium cryptum (strain JF-5)).